A 438-amino-acid polypeptide reads, in one-letter code: MYHDYASKLLADYRSDPPLWESDLPRHNRYSDNILNSRYCGNKNGAAPVYNEYTNSPEKAEKGLQLSDLRNFSFMLNPQHKNIGYGDAQDLEPYSSIPKNKLFNHFKNHRPAFSTHTENLIRRNVVRTEKKTFPQVASLKGTQKNCLTQPSSLPSLKNPKNSSVPSTRFSEHTKFFSYEDIPKLKTKGTIKHEQHLGDQMPGQHYNGYIPHKDVYNILCLAHNLPASVEKGIAGRGIPLGNPHVKPNIEQELIKSTSTYTGVPMLGPLPPKDSQHGREYQEFSANRHMLQVANILHSVFANHSIKPQILEDIPVLNAQLTSIKPVSPFLNKAYQTHYMENIVTLVPRFKSIANYSSPIPNYSKRNSGQAEYFDTSKQTISRHNNYIPKYTGGIGDSKLDSTFPKDFNASSVPLTSAEKDHSLRGDNSACCISSISPSL.

Residues 145–167 are disordered; that stretch reads NCLTQPSSLPSLKNPKNSSVPST.

The protein belongs to the asfivirus p49 structural protein family.

It is found in the virion. In terms of biological role, together with the penton and the other minor capsid proteins (M1249L, p17), forms a complicated network immediately below the outer capsid shell, stabilizing the whole capsid. Plays an essential role in the formation of infectious virus particles. Especially required for the formation of the capsid vertices. During virion assembly, associates with the membrane and probably mediates the docking of the penton complex to the inner membrane, where it recruits the capsomers to form the penton core. This chain is Minor capsid protein p49, found in Ornithodoros (relapsing fever ticks).